Here is a 255-residue protein sequence, read N- to C-terminus: F-box only protein 44 (255 aa).

Residues 3–50 form the F-box domain; that stretch reads VGNINELPENILLELFIHIPARQLLLRCRPVCSLWRDLIDLVTLWKRK. Residues 71–252 form the FBA domain; it reads FYFLRSLQRN…VTNSSITIGP (182 aa).

Part of a SCF (SKP1-cullin-F-box) protein ligase complex. Interacts with SKP1 and CUL1. In terms of tissue distribution, expressed in brain, liver, pancreas and adipose tissue (at protein level). Widely expressed.

In terms of biological role, substrate-recognition component of the SCF (SKP1-CUL1-F-box protein)-type E3 ubiquitin ligase complex. This chain is F-box only protein 44 (Fbxo44), found in Mus musculus (Mouse).